The primary structure comprises 149 residues: Cytochrome c-type biogenesis protein CcmE (149 aa).

The Cytoplasmic portion of the chain corresponds to 1–7 (MTRKQKR). A helical; Signal-anchor for type II membrane protein transmembrane segment spans residues 8 to 28 (LAVIAGGMGFIATAVLLVLFA). Over 29–149 (FSQSVAYFYM…GVWKGEEASQ (121 aa)) the chain is Periplasmic. Heme-binding residues include histidine 123 and tyrosine 127.

This sequence belongs to the CcmE/CycJ family.

The protein localises to the cell inner membrane. In terms of biological role, heme chaperone required for the biogenesis of c-type cytochromes. Transiently binds heme delivered by CcmC and transfers the heme to apo-cytochromes in a process facilitated by CcmF and CcmH. In Rhizobium rhizogenes (strain K84 / ATCC BAA-868) (Agrobacterium radiobacter), this protein is Cytochrome c-type biogenesis protein CcmE.